The sequence spans 522 residues: Maturase K (522 aa).

This sequence belongs to the intron maturase 2 family. MatK subfamily.

The protein resides in the plastid. It localises to the chloroplast. Usually encoded in the trnK tRNA gene intron. Probably assists in splicing its own and other chloroplast group II introns. This is Maturase K from Schizorhiza neglecta (Lapeirousia neglecta).